Consider the following 805-residue polypeptide: Transitional endoplasmic reticulum ATPase (805 aa).

Ser3 bears the Phosphoserine mark. ATP is bound by residues 247 to 253 (PGTGKTL), Asn348, His384, and 521 to 526 (GCGKTL). The segment at 768 to 805 (FGSFRFPAGGQGGAGPSQGAGGGSGGSHFNEEEDDLYG) is disordered. Residues 776–793 (GGQGGAGPSQGAGGGSGG) show a composition bias toward gly residues.

Belongs to the AAA ATPase family. In terms of assembly, homohexamer. Forms a ring-shaped particle of 12.5 nm diameter, that displays 6-fold radial symmetry. Interacts with the FACT/DUF complex, which includes subunits ssrp1/duf87 and supt16h/duf140. Phosphorylated.

The protein localises to the cytoplasm. The protein resides in the cytosol. It is found in the endoplasmic reticulum. It localises to the nucleus. Its subcellular location is the stress granule. It carries out the reaction ATP + H2O = ADP + phosphate + H(+). ATPase activity is inhibited or reduced by lowering pH from 9.0 to 7.0, and by addition of Ca(2+), EDTA, KNO(3) or by treatment with N-ethylmaleimide (NEM). Its function is as follows. Necessary for the fragmentation of Golgi stacks during mitosis and for their reassembly after mitosis. Involved in the formation of the nuclear envelope, and of the transitional endoplasmic reticulum (tER). The transfer of membranes from the endoplasmic reticulum to the Golgi apparatus occurs via 50-70 nm transition vesicles which derive from part-rough, part-smooth transitional elements of the endoplasmic reticulum (tER). Vesicle budding from the tER is an ATP-dependent process. Involved in endoplasmic reticulum stress-induced pre-emptive quality control, a mechanism that selectively attenuates the translocation of newly synthesized proteins into the endoplasmic reticulum and reroutes them to the cytosol for proteasomal degradation. Involved in clearance process by mediating G3BP1 extraction from stress granules. Also involved in DNA damage response: recruited to double-strand breaks (DSBs) sites and promotes the recruitment of tp53bp1 at DNA damage sites. Together with sprtn metalloprotease, involved in the repair of covalent DNA-protein cross-links (DPCs) during DNA synthesis. Involved in interstrand cross-link repair in response to replication stress by mediating unloading of the ubiquitinated CMG helicase complex. Enhances cell cycle progression and inhibits apoptosis at low temperatures. Essential for the maturation of ubiquitin-containing autophagosomes and the clearance of ubiquitinated protein by autophagy. Acts as a negative regulator of type I interferon production by promoting ubiquitination of rigi. May play a role in the ubiquitin-dependent sorting of membrane proteins to lysosomes where they undergo degradation. May more particularly play a role in caveolins sorting in cells. By controlling the steady-state expression of the IGF1R receptor, indirectly regulates the insulin-like growth factor receptor signaling pathway. The sequence is that of Transitional endoplasmic reticulum ATPase from Xenopus tropicalis (Western clawed frog).